The primary structure comprises 322 residues: Cytochrome c biogenesis protein CcsA (322 aa).

The next 8 helical transmembrane spans lie at 9-29 (ILTH…LITL), 44-64 (GMIA…IYSG), 71-91 (LYES…VPYF), 98-118 (LTTI…SGLL), 143-163 (MILS…LLVI), 226-246 (VISL…VWAN), 253-273 (WSWD…AIYL), and 287-307 (AIVA…VNLL).

This sequence belongs to the CcmF/CycK/Ccl1/NrfE/CcsA family. As to quaternary structure, may interact with Ccs1.

The protein resides in the plastid. It is found in the chloroplast thylakoid membrane. Required during biogenesis of c-type cytochromes (cytochrome c6 and cytochrome f) at the step of heme attachment. This chain is Cytochrome c biogenesis protein CcsA, found in Guizotia abyssinica (Niger).